The chain runs to 337 residues: Low-density lipoprotein receptor class A domain-containing protein 3 (337 aa).

The first 13 residues, 1-13 (MWLLYLILGSVES), serve as a signal peptide directing secretion. The Extracellular segment spans residues 14-169 (QLLPGNNHTT…NQLLYYPSIT (156 aa)). An N-linked (GlcNAc...) asparagine glycan is attached at Asn20. 3 consecutive LDL-receptor class A domains span residues 24-61 (ECNI…KECP), 66-103 (RCGP…ENCT), and 108-144 (LCSN…EHCH). 9 disulfide bridges follow: Cys25/Cys38, Cys33/Cys51, Cys45/Cys60, Cys67/Cys80, Cys74/Cys93, Cys87/Cys102, Cys109/Cys121, Cys116/Cys134, and Cys128/Cys143. An N-linked (GlcNAc...) asparagine glycan is attached at Asn101. The helical transmembrane segment at 170–190 (YTIIGSSVIFVLVVALLALVL) threads the bilayer. Residues 191–337 (HHQRKRNLMS…DDLPSTEVDV (147 aa)) lie on the Cytoplasmic side of the membrane. The segment covering 243–253 (QQPVSVESPPS) has biased composition (polar residues). The segment at 243 to 337 (QQPVSVESPP…DDLPSTEVDV (95 aa)) is disordered. Residues 291–303 (RSRTGSSASAGST) are compositionally biased toward low complexity.

The protein belongs to the LDLR family.

The protein localises to the cell membrane. The sequence is that of Low-density lipoprotein receptor class A domain-containing protein 3 from Xenopus tropicalis (Western clawed frog).